The sequence spans 129 residues: MKEVIDTVGRRKTSVARVFMSPGKGKIVVNKLPVEEYFKDEFKRSQALKPLVTAEKQDEFDIKVNVKGGGLTGQSGAVCLAIARALVEFDESIRPTLRTERLLTRDPRMVERKKYGKKKARKSFQFSKR.

The interval 110 to 129 (VERKKYGKKKARKSFQFSKR) is disordered. Over residues 114–129 (KYGKKKARKSFQFSKR) the composition is skewed to basic residues.

Belongs to the universal ribosomal protein uS9 family.

This is Small ribosomal subunit protein uS9 from Chlorobaculum parvum (strain DSM 263 / NCIMB 8327) (Chlorobium vibrioforme subsp. thiosulfatophilum).